Consider the following 342-residue polypeptide: uncharacterized protein (342 aa).

It belongs to the cycloisomerase 2 family.

This is an uncharacterized protein from Staphylococcus aureus (strain NCTC 8325 / PS 47).